Reading from the N-terminus, the 221-residue chain is Carotenogenesis protein CarR (221 aa).

The next 6 membrane-spanning stretches (helical) occupy residues 56-76 (LGLLAAVVLLAVGAVTGPLLL), 79-99 (APLLAMLVGTSAVCAWGALSP), 107-127 (LGVGLAVVSAAALVLARGAPH), 136-156 (VCTVSHLAIGVVPLVVALFAL), 166-186 (AVVAGLSVGSTGALLGELACE), and 191-211 (HVLSHHLLAWVVITVVLVVIS).

It localises to the cell inner membrane. Its function is as follows. Negative regulator of the carotenoid synthesis regulon. It is probably inactivated by protoporphyrin IX in the presence of blue light. Inactivation of CarR leads to loss of negative control over the carotenogenesis protein CarQ. The protein is Carotenogenesis protein CarR (carR) of Myxococcus xanthus.